Consider the following 352-residue polypeptide: uncharacterized protein (352 aa).

Transmembrane regions (helical) follow at residues 6-26 (FIFLMFISIGILLLLLNIINP), 30-50 (FHIVEWKTIFSLFYLMVIINI), 76-96 (IFLTLFLSSLITNDVSLFVII), 151-171 (EFIINMIPFEIFGILAILPFL), 197-217 (FILVLLCVFGYLNFIYILPLI), 226-246 (VKVDYLFLLTFIFLFVDIEGL), 291-311 (WLPIAYGVNIGGNGTLIASFA), and 330-350 (LIGGIIYIMHLIVLVAYAKIF).

It belongs to the CitM (TC 2.A.11) transporter family.

Its subcellular location is the cell membrane. This is an uncharacterized protein from Methanocaldococcus jannaschii (strain ATCC 43067 / DSM 2661 / JAL-1 / JCM 10045 / NBRC 100440) (Methanococcus jannaschii).